The following is a 330-amino-acid chain: Tryptophan--tRNA ligase (330 aa).

ATP-binding positions include 10–12 (QPS) and 18–19 (GN). A 'HIGH' region motif is present at residues 11 to 19 (PSGSVTLGN). Position 133 (D133) interacts with L-tryptophan. ATP contacts are provided by residues 145-147 (GED), I184, and 193-197 (KMSKS). A 'KMSKS' region motif is present at residues 193–197 (KMSKS).

Belongs to the class-I aminoacyl-tRNA synthetase family. As to quaternary structure, homodimer.

The protein localises to the cytoplasm. The catalysed reaction is tRNA(Trp) + L-tryptophan + ATP = L-tryptophyl-tRNA(Trp) + AMP + diphosphate + H(+). In terms of biological role, catalyzes the attachment of tryptophan to tRNA(Trp). The protein is Tryptophan--tRNA ligase of Bacillus subtilis (strain 168).